The primary structure comprises 160 residues: uncharacterized protein (160 aa).

This is an uncharacterized protein from Methanocaldococcus jannaschii (strain ATCC 43067 / DSM 2661 / JAL-1 / JCM 10045 / NBRC 100440) (Methanococcus jannaschii).